Here is a 155-residue protein sequence, read N- to C-terminus: Large ribosomal subunit protein uL22c (155 aa).

The protein belongs to the universal ribosomal protein uL22 family. As to quaternary structure, part of the 50S ribosomal subunit.

Its subcellular location is the plastid. The protein localises to the chloroplast. Its function is as follows. This protein binds specifically to 23S rRNA. In terms of biological role, the globular domain of the protein is located near the polypeptide exit tunnel on the outside of the subunit, while an extended beta-hairpin is found that lines the wall of the exit tunnel in the center of the 70S ribosome. This chain is Large ribosomal subunit protein uL22c (rpl22), found in Nicotiana tomentosiformis (Tobacco).